Reading from the N-terminus, the 371-residue chain is Alanine dehydrogenase (371 aa).

Substrate-binding residues include Arg15 and Lys75. Residue His96 is the Proton donor/acceptor of the active site. NAD(+)-binding positions include Ser134, 178–179, Asp198, Ser220, 239–240, 267–270, Arg279, and 298–301; these read TA, VL, IAID, and VANM. Residue Asp270 is the Proton donor/acceptor of the active site.

This sequence belongs to the AlaDH/PNT family. Homohexamer. Trimer of dimers.

Its subcellular location is the cytoplasm. The enzyme catalyses L-alanine + NAD(+) + H2O = pyruvate + NH4(+) + NADH + H(+). It participates in amino-acid degradation; L-alanine degradation via dehydrogenase pathway; NH(3) and pyruvate from L-alanine: step 1/1. Its function is as follows. Catalyzes the reversible reductive amination of pyruvate to L-alanine. Required for proficient utilization of D- or L-alanine as a nitrogen source. May be required for the adaptation from aerobic growth to anaerobic dormancy. It could be involved in the maintenance of the NAD pool during the shift to an anaerobic dormant state in which oxygen as a terminal electron acceptor becomes limiting. The chain is Alanine dehydrogenase from Mycolicibacterium smegmatis (strain ATCC 700084 / mc(2)155) (Mycobacterium smegmatis).